The primary structure comprises 91 residues: uncharacterized protein (91 aa).

3 helical membrane-spanning segments follow: residues 4–21 (YAII…LRRG), 28–50 (IIEV…SHAV), and 60–82 (VKAF…GTYL).

It localises to the cell membrane. This is an uncharacterized protein from Archaeoglobus fulgidus (strain ATCC 49558 / DSM 4304 / JCM 9628 / NBRC 100126 / VC-16).